A 399-amino-acid chain; its full sequence is Lipase member K (399 aa).

The first 19 residues, 1 to 19 (MWQLLAAACWMLLLGSMYG), serve as a signal peptide directing secretion. Residues 78-378 (PAVYLQHGLI…HYNHVDFYLG (301 aa)) enclose the AB hydrolase-1 domain. Residue Ser172 is the Nucleophile of the active site. Cys246 and Cys255 form a disulfide bridge. Residues Asn271 and Asn327 are each glycosylated (N-linked (GlcNAc...) asparagine). Active-site charge relay system residues include Asp343 and His372.

This sequence belongs to the AB hydrolase superfamily. Lipase family. As to expression, exclusively expressed in the epidermis within the granular keratinocytes.

The protein resides in the secreted. Its function is as follows. Plays a highly specific role in the last step of keratinocyte differentiation. May have an essential function in lipid metabolism of the most differentiated epidermal layers. The polypeptide is Lipase member K (LIPK) (Homo sapiens (Human)).